The following is a 58-amino-acid chain: Large ribosomal subunit protein bL32c (58 aa).

Belongs to the bacterial ribosomal protein bL32 family.

The protein resides in the plastid. It localises to the chloroplast. This chain is Large ribosomal subunit protein bL32c, found in Chaetosphaeridium globosum (Charophycean green alga).